The sequence spans 818 residues: Serine/threonine-protein phosphatase 4 regulatory subunit 3 (818 aa).

A WH1 domain is found at 1 to 100 (MTDTRRRVKV…DEIWEKICQV (100 aa)). Over residues 670 to 681 (FNTDEEDLEDGE) the composition is skewed to acidic residues. The interval 670–818 (FNTDEEDLED…PLSKKSKLSS (149 aa)) is disordered. Positions 703–718 (FMERKKLKDSEEKEVL) are enriched in basic and acidic residues. Low complexity predominate over residues 729-775 (SPSFKLSFSSSPKASLSSPPTASLHPGSPGSPSSPGTGARSSPPSAA). A phosphoserine mark is found at S769 and S770. The span at 788-803 (YPDDDEEDEDEEDADS) shows a compositional bias: acidic residues.

Belongs to the SMEK family. As to quaternary structure, serine/threonine-protein phosphatase 4 (PP4) occurs in different assemblies of the catalytic and one or more regulatory subunits.

Its function is as follows. Regulatory subunit of serine/threonine-protein phosphatase 4. The chain is Serine/threonine-protein phosphatase 4 regulatory subunit 3 (smek1) from Danio rerio (Zebrafish).